The following is a 673-amino-acid chain: DNA mismatch repair protein MutL (673 aa).

The protein belongs to the DNA mismatch repair MutL/HexB family.

Its function is as follows. This protein is involved in the repair of mismatches in DNA. It is required for dam-dependent methyl-directed DNA mismatch repair. May act as a 'molecular matchmaker', a protein that promotes the formation of a stable complex between two or more DNA-binding proteins in an ATP-dependent manner without itself being part of a final effector complex. The polypeptide is DNA mismatch repair protein MutL (Ehrlichia chaffeensis (strain ATCC CRL-10679 / Arkansas)).